Here is a 151-residue protein sequence, read N- to C-terminus: PTITNDGVSIAKEIELEDPYEKIGAELVKEVAKKTDDVAGDGTTTATVLAQALVKEGLRNVAAGANPLGLKRGIEKAVEKVTETLLKSAKEVETKEQIAATAAISAGDQSIGDLIAEAMDKVGNEGVITVEESNTFGLQLELTEGMRFDKG.

An ATP-binding site is contributed by 41-45 (DGTTT).

This sequence belongs to the chaperonin (HSP60) family. Forms a cylinder of 14 subunits composed of two heptameric rings stacked back-to-back. Interacts with the co-chaperonin GroES.

Its subcellular location is the cytoplasm. It carries out the reaction ATP + H2O + a folded polypeptide = ADP + phosphate + an unfolded polypeptide.. Functionally, together with its co-chaperonin GroES, plays an essential role in assisting protein folding. The GroEL-GroES system forms a nano-cage that allows encapsulation of the non-native substrate proteins and provides a physical environment optimized to promote and accelerate protein folding. The sequence is that of Chaperonin GroEL from Mycobacterium marinum.